The chain runs to 363 residues: Chorismate synthase (363 aa).

The disordered stretch occupies residues 36–58 (SESDIQGDLDRRRPGQSKITTPR). Arg-47 is an NADP(+) binding site. FMN is bound by residues 124–126 (RSS), Gly-286, 301–305 (KPTAT), and Arg-327.

It belongs to the chorismate synthase family. Homotetramer. The cofactor is FMNH2.

It carries out the reaction 5-O-(1-carboxyvinyl)-3-phosphoshikimate = chorismate + phosphate. The protein operates within metabolic intermediate biosynthesis; chorismate biosynthesis; chorismate from D-erythrose 4-phosphate and phosphoenolpyruvate: step 7/7. Functionally, catalyzes the anti-1,4-elimination of the C-3 phosphate and the C-6 proR hydrogen from 5-enolpyruvylshikimate-3-phosphate (EPSP) to yield chorismate, which is the branch point compound that serves as the starting substrate for the three terminal pathways of aromatic amino acid biosynthesis. This reaction introduces a second double bond into the aromatic ring system. The sequence is that of Chorismate synthase from Crocosphaera subtropica (strain ATCC 51142 / BH68) (Cyanothece sp. (strain ATCC 51142)).